A 536-amino-acid chain; its full sequence is Global nitrogen regulator NrpR (536 aa).

The interval 7–72 is winged helix-turn-helix; that stretch reads VEILSILSEA…EITEKGIEEL (66 aa). 2 NRD regions span residues 80–314 and 315–536; these read RIGS…KGKF and KVTP…YDDI.

The protein belongs to the NrpR family. In terms of assembly, homotetramer. Binds to a single operator as a dimer and cooperatively to two operators as a dimer pair.

Its activity is regulated as follows. Under nitrogen limitation, binding of the intracellular nitrogen metabolite 2-oxoglutarate to NrpR decreases the binding affinity of NrpR to DNA, leading to initiation of transcription. Functionally, transcriptional repressor of nitrogen fixation and assimilation genes. Binds to two tandem operators in the glnA and nif promoters, thereby blocking transcription of the genes. This Methanococcus maripaludis (strain DSM 14266 / JCM 13030 / NBRC 101832 / S2 / LL) protein is Global nitrogen regulator NrpR.